The chain runs to 317 residues: MGIDQRPLAIAVMGPTASGKTATAIALARQLDGEIVSVDSALVYRHLDIGSAKPDAAERAQAPHHLLDLRDPWQTYSAAEFAADASRVVVDIVARGKMPILAGGTGLYFRALLQGLSPMPEADPAMRAALAAEAAERGWAALHAELAQIDPAAATRIHATDPQRIQRALEVYRLTGTPITEWQRRPGVAPLPVRTLKLILAPHDRAVLHQRIEARFDAMLAQGFLDEVRALRAMPEMAAVEAPLDLPAVRAVGYRQAWEYLDGEGDAARFRDKAIFATRQLAKRQLTWLRGELDARWFDPHIDQERLAGAVSTFVAR.

ATP is bound at residue 14–21; sequence GPTASGKT. 16 to 21 serves as a coordination point for substrate; sequence TASGKT. Interaction with substrate tRNA stretches follow at residues 39 to 42 and 163 to 167; these read DSAL and QRIQR.

The protein belongs to the IPP transferase family. Monomer. Mg(2+) serves as cofactor.

The enzyme catalyses adenosine(37) in tRNA + dimethylallyl diphosphate = N(6)-dimethylallyladenosine(37) in tRNA + diphosphate. Functionally, catalyzes the transfer of a dimethylallyl group onto the adenine at position 37 in tRNAs that read codons beginning with uridine, leading to the formation of N6-(dimethylallyl)adenosine (i(6)A). The protein is tRNA dimethylallyltransferase of Stenotrophomonas maltophilia (strain R551-3).